A 337-amino-acid polypeptide reads, in one-letter code: Tetraacyldisaccharide 4'-kinase (337 aa).

51-58 (HVGGAGKT) is a binding site for ATP.

The protein belongs to the LpxK family.

The catalysed reaction is a lipid A disaccharide + ATP = a lipid IVA + ADP + H(+). It functions in the pathway glycolipid biosynthesis; lipid IV(A) biosynthesis; lipid IV(A) from (3R)-3-hydroxytetradecanoyl-[acyl-carrier-protein] and UDP-N-acetyl-alpha-D-glucosamine: step 6/6. Functionally, transfers the gamma-phosphate of ATP to the 4'-position of a tetraacyldisaccharide 1-phosphate intermediate (termed DS-1-P) to form tetraacyldisaccharide 1,4'-bis-phosphate (lipid IVA). This chain is Tetraacyldisaccharide 4'-kinase, found in Afipia carboxidovorans (strain ATCC 49405 / DSM 1227 / KCTC 32145 / OM5) (Oligotropha carboxidovorans).